The primary structure comprises 202 residues: Holliday junction branch migration complex subunit RuvA (202 aa).

Residues 1–64 (MIDFLKGRLV…ETALEMFGFS (64 aa)) are domain I. A domain II region spans residues 65-143 (SELDRTAFLL…KQQVAVSAEL (79 aa)). Positions 144-152 (PASDGVPVL) are flexible linker. Residues 152–202 (LAGRAENEALAALISLGYTPREAREALNRLPDRKLDAAGLVHAALRIMGSQ) are domain III.

Belongs to the RuvA family. Homotetramer. Forms an RuvA(8)-RuvB(12)-Holliday junction (HJ) complex. HJ DNA is sandwiched between 2 RuvA tetramers; dsDNA enters through RuvA and exits via RuvB. An RuvB hexamer assembles on each DNA strand where it exits the tetramer. Each RuvB hexamer is contacted by two RuvA subunits (via domain III) on 2 adjacent RuvB subunits; this complex drives branch migration. In the full resolvosome a probable DNA-RuvA(4)-RuvB(12)-RuvC(2) complex forms which resolves the HJ.

Its subcellular location is the cytoplasm. The RuvA-RuvB-RuvC complex processes Holliday junction (HJ) DNA during genetic recombination and DNA repair, while the RuvA-RuvB complex plays an important role in the rescue of blocked DNA replication forks via replication fork reversal (RFR). RuvA specifically binds to HJ cruciform DNA, conferring on it an open structure. The RuvB hexamer acts as an ATP-dependent pump, pulling dsDNA into and through the RuvAB complex. HJ branch migration allows RuvC to scan DNA until it finds its consensus sequence, where it cleaves and resolves the cruciform DNA. This Desulforudis audaxviator (strain MP104C) protein is Holliday junction branch migration complex subunit RuvA.